The sequence spans 222 residues: Kunitz trypsin inhibitor 3 (222 aa).

The N-terminal stretch at 1–23 (MEKLTLSFITLTVLSAIFTAASA) is a signal peptide. N-linked (GlcNAc...) asparagine glycosylation occurs at Asn-65. Intrachain disulfides connect Cys-72–Cys-119 and Cys-165–Cys-173. A glycan (N-linked (GlcNAc...) asparagine) is linked at Asn-175.

It belongs to the protease inhibitor I3 (leguminous Kunitz-type inhibitor) family.

Exhibits Kunitz trypsin protease inhibitor activity. This is Kunitz trypsin inhibitor 3 from Arabidopsis thaliana (Mouse-ear cress).